The sequence spans 637 residues: Sodium-dependent proline transporter (637 aa).

At 1 to 45 (MKKLQEAHLRKPITPDLLMTPSDQGDVDLDVDFAADRGNWTGKLD) the chain is on the cytoplasmic side. At Thr-20 the chain carries Phosphothreonine. Ser-22 is modified (phosphoserine). 3 consecutive transmembrane segments (helical) span residues 46 to 66 (FLLS…FPYR), 74 to 93 (AFLV…LFFL), and 117 to 137 (GAGA…NMII). Over 138–214 (AYVLFYLFAS…QGIGRPGEIR (77 aa)) the chain is Extracellular. N-linked (GlcNAc...) asparagine glycosylation is present at Asn-182. A run of 9 helical transmembrane segments spans residues 215-233 (WNLC…LCIL), 242-259 (VVYF…MLLV), 295-312 (IFYS…FASY), 324-345 (FIVT…FSVL), 378-397 (LPLS…TLGL), 425-443 (VFSG…ILTT), 459-479 (SFGL…VYGI), 500-519 (ACWL…YSIV), and 538-556 (LGIL…GMLV). Over 557 to 637 (AVLREEGSLW…IAEEEEESMM (81 aa)) the chain is Cytoplasmic. Residues Ser-573 and Ser-582 each carry the phosphoserine modification. Thr-588 carries the phosphothreonine modification. At Tyr-591 the chain carries Phosphotyrosine. Phosphoserine occurs at positions 598 and 600.

This sequence belongs to the sodium:neurotransmitter symporter (SNF) (TC 2.A.22) family. SLC6A7 subfamily.

It is found in the synaptic cell membrane. The catalysed reaction is L-proline(out) + chloride(out) + 2 Na(+)(out) = L-proline(in) + chloride(in) + 2 Na(+)(in). It carries out the reaction L-pipecolate(out) + chloride(out) + 2 Na(+)(out) = L-pipecolate(in) + chloride(in) + 2 Na(+)(in). Its function is as follows. Brain specific sodium (and chloride)-dependent proline transporter. Terminates the action of proline by its high affinity sodium-dependent reuptake into presynaptic terminals. The sequence is that of Sodium-dependent proline transporter from Mus musculus (Mouse).